A 558-amino-acid polypeptide reads, in one-letter code: Formate--tetrahydrofolate ligase (558 aa).

66–73 (TPAGEGKT) is a binding site for ATP.

This sequence belongs to the formate--tetrahydrofolate ligase family.

It carries out the reaction (6S)-5,6,7,8-tetrahydrofolate + formate + ATP = (6R)-10-formyltetrahydrofolate + ADP + phosphate. The protein operates within one-carbon metabolism; tetrahydrofolate interconversion. In Neisseria meningitidis serogroup B (strain ATCC BAA-335 / MC58), this protein is Formate--tetrahydrofolate ligase.